The primary structure comprises 253 residues: MRILLSNDDGVHAPGIQTLAKALREFADVQVVAPDRNRSGASNSLTLESSLRTFTFDNGDIAVQMGTPTDCVYLGVNALMRPRPDIVVSGINAGPNLGDDVIYSGTVAAAMEGRHLGFPALAVSLNGYQHYDTAAAVTCALLRGLSREPLRTGRILNVNVPDLPLAQIKGIRVTRCGSRHPADKVIPQEDPRGNTLYWIGPPGDKYDAGPDTDFAAVDEGYVSVTPLHVDLTAHSAHDVVSDWLDSVGVGTQW.

A divalent metal cation is bound by residues aspartate 8, aspartate 9, serine 39, and asparagine 92.

This sequence belongs to the SurE nucleotidase family. It depends on a divalent metal cation as a cofactor.

The protein resides in the cytoplasm. The catalysed reaction is a ribonucleoside 5'-phosphate + H2O = a ribonucleoside + phosphate. It carries out the reaction a ribonucleoside 3'-phosphate + H2O = a ribonucleoside + phosphate. It catalyses the reaction [phosphate](n) + H2O = [phosphate](n-1) + phosphate + H(+). Functionally, nucleotidase with a broad substrate specificity as it can dephosphorylate various ribo- and deoxyribonucleoside 5'-monophosphates and ribonucleoside 3'-monophosphates with highest affinity to 3'-AMP. Also hydrolyzes polyphosphate (exopolyphosphatase activity) with the preference for short-chain-length substrates (P20-25). Might be involved in the regulation of dNTP and NTP pools, and in the turnover of 3'-mononucleotides produced by numerous intracellular RNases (T1, T2, and F) during the degradation of various RNAs. The sequence is that of 5'/3'-nucleotidase SurE from Salmonella paratyphi B (strain ATCC BAA-1250 / SPB7).